Reading from the N-terminus, the 268-residue chain is Glutamate racemase (268 aa).

Substrate contacts are provided by residues 9 to 10 (DS) and 41 to 42 (YG). Catalysis depends on Cys-73, which acts as the Proton donor/acceptor. 74-75 (NS) serves as a coordination point for substrate. Cys-183 (proton donor/acceptor) is an active-site residue. 184 to 185 (TH) is a binding site for substrate.

This sequence belongs to the aspartate/glutamate racemases family.

It catalyses the reaction L-glutamate = D-glutamate. It participates in cell wall biogenesis; peptidoglycan biosynthesis. Provides the (R)-glutamate required for cell wall biosynthesis. The protein is Glutamate racemase of Shewanella pealeana (strain ATCC 700345 / ANG-SQ1).